Here is a 106-residue protein sequence, read N- to C-terminus: Gas vesicle protein J (106 aa).

It belongs to the gas vesicle GvpA family.

Its subcellular location is the gas vesicle. Functionally, a minor component of the gas vesicle, might be involved in nucleating gas vesicle formation. Gas vesicles are hollow, gas filled proteinaceous nanostructures found in some microorganisms. It is not clear what function gas vesicles perform in soil bacteria. This Streptomyces sp. (strain CB03234) protein is Gas vesicle protein J.